We begin with the raw amino-acid sequence, 265 residues long: MKAVVLAVAALFLAGGEARHFWQRDEPQASPWDKIKEFTTQYVDSVKDSGSEYLKQFETSALGTQMNLKLTENLDTLSSTFSKLREQLGPVTQEFWQNLEKDTEWLRQEMNKDLADMKQKVQPYMEQFQKTWQEEVERYRQKVEPLSTELREGARQKLQELQEKLAPLGADLRDSARVHVDALRTQLAPYSEQMRERLAERLAALRDSPSLAEYQAKAHEHLKTLHEKAQPALSDLGQGVLPVLESLKATLVGAIEEASKKLSSQ.

Positions 1–18 (MKAVVLAVAALFLAGGEA) are cleaved as a signal peptide. 2 tandem repeats follow at residues 68–89 (LKLTENLDTLSSTFSKLREQLG) and 90–111 (PVTQEFWQNLEKDTEWLRQEMN). The tract at residues 68–265 (LKLTENLDTL…EEASKKLSSQ (198 aa)) is 10 X approximate tandem repeats. Met110 carries the post-translational modification Methionine sulfoxide. The 3; half-length repeat unit spans residues 112–122 (KDLADMKQKVQ). Tandem repeats lie at residues 123 to 144 (PYMEQFQKTWQEEVERYRQKVE), 145 to 166 (PLSTELREGARQKLQELQEKLA), and 167 to 188 (PLGADLRDSARVHVDALRTQLA). The 7; truncated repeat unit spans residues 189–208 (PYSEQMRERLAERLAALRDS). Residue Met194 is modified to Methionine sulfoxide. Repeat 8 spans residues 209–230 (PSLAEYQAKAHEHLKTLHEKAQ). The 9; half-length repeat unit spans residues 231–241 (PALSDLGQGVL). Copy 10 of the repeat occupies 242–265 (PVLESLKATLVGAIEEASKKLSSQ).

It belongs to the apolipoprotein A1/A4/E family. As to quaternary structure, homodimer. Interacts with APOA1BP and CLU. Component of a sperm activating protein complex (SPAP), consisting of APOA1, an immunoglobulin heavy chain, an immunoglobulin light chain and albumin. Interacts with NDRG1. Interacts with SCGB3A2. Interacts with NAXE and YJEFN3. Post-translationally, glycosylated. In terms of processing, palmitoylated. Phosphorylation sites are present in the extracellular medium.

It localises to the secreted. Participates in the reverse transport of cholesterol from tissues to the liver for excretion by promoting cholesterol efflux from tissues and by acting as a cofactor for the lecithin cholesterol acyltransferase (LCAT). As part of the SPAP complex, activates spermatozoa motility. This chain is Apolipoprotein A-I (Apoa1), found in Dipodomys ordii (Ord's kangaroo rat).